The following is a 570-amino-acid chain: Pre-mRNA 3'-end-processing factor FIP1 (570 aa).

Basic and acidic residues predominate over residues 1–10; it reads MSAEEADKTT. Residues 1 to 107 are disordered; the sequence is MSAEEADKTT…SDDDDDDVRV (107 aa). Residues 16–38 are compositionally biased toward acidic residues; that stretch reads AGDEEEEWLYGDEGESKETEEEE. Residues 56–77 show a composition bias toward low complexity; it reads DAPTTTNNSSDSATPPTTTTTT. Residues 87–104 show a composition bias toward acidic residues; sequence APGEDEDSESDSDDDDDD. Thr125 carries the phosphothreonine modification. Residue Ser247 is modified to Phosphoserine. Disordered stretches follow at residues 300–328, 371–400, and 418–570; these read RRRH…VQKM, PNFP…YDGR, and GAVN…EAME. The segment covering 371-384 has biased composition (pro residues); the sequence is PNFPPPTGGPPPSL. Basic and acidic residues-rich tracts occupy residues 436–462 and 476–506; these read YPRR…RDHS and DEER…EERH. 2 stretches are compositionally biased toward basic residues: residues 520–529 and 538–548; these read KSSRSSSRRR and HRRHKHKKSKR. Residues 549–562 are compositionally biased toward basic and acidic residues; sequence SKEGKEPSEERSAD.

This sequence belongs to the FIP1 family.

It is found in the nucleus. Its function is as follows. Involved in mRNA processing. The protein is Pre-mRNA 3'-end-processing factor FIP1 (fip1l1) of Danio rerio (Zebrafish).